A 288-amino-acid polypeptide reads, in one-letter code: Alpha/beta hydrolase domain-containing protein 17B (288 aa).

Catalysis depends on charge relay system residues Ser-170, Asp-235, and His-264. Phosphoserine is present on Ser-282.

It belongs to the AB hydrolase superfamily. ABHD17 family. In terms of processing, palmitoylated on cysteine residues located in a cysteine cluster at the N-terminus which promotes membrane localization. Palmitoylation is required for post-synaptic localization and for depalmitoylating activity towards DLG4/PSD95. Expressed in brain.

The protein resides in the cell membrane. It is found in the recycling endosome membrane. Its subcellular location is the cell projection. It localises to the dendritic spine. The protein localises to the postsynaptic density membrane. The catalysed reaction is S-hexadecanoyl-L-cysteinyl-[protein] + H2O = L-cysteinyl-[protein] + hexadecanoate + H(+). Its function is as follows. Hydrolyzes fatty acids from S-acylated cysteine residues in proteins. Has depalmitoylating activity towards DLG4/PSD95. Has depalmitoylating activity towards GAP43. Has depalmitoylating activity towards MAP6. Has depalmitoylating activity towards NRAS. The chain is Alpha/beta hydrolase domain-containing protein 17B from Mus musculus (Mouse).